A 133-amino-acid chain; its full sequence is Phosphoribosyl-AMP cyclohydrolase (133 aa).

Aspartate 82 lines the Mg(2+) pocket. Cysteine 83 is a Zn(2+) binding site. Positions 84 and 86 each coordinate Mg(2+). Cysteine 99 and cysteine 106 together coordinate Zn(2+).

The protein belongs to the PRA-CH family. As to quaternary structure, homodimer. Mg(2+) is required as a cofactor. It depends on Zn(2+) as a cofactor.

Its subcellular location is the cytoplasm. The catalysed reaction is 1-(5-phospho-beta-D-ribosyl)-5'-AMP + H2O = 1-(5-phospho-beta-D-ribosyl)-5-[(5-phospho-beta-D-ribosylamino)methylideneamino]imidazole-4-carboxamide. The protein operates within amino-acid biosynthesis; L-histidine biosynthesis; L-histidine from 5-phospho-alpha-D-ribose 1-diphosphate: step 3/9. Its function is as follows. Catalyzes the hydrolysis of the adenine ring of phosphoribosyl-AMP. The chain is Phosphoribosyl-AMP cyclohydrolase from Rhodospirillum centenum (strain ATCC 51521 / SW).